Consider the following 153-residue polypeptide: MALGALKSDSYVELSQYRDQHFRGNRSDQECLLKHSCTLYVGNLSFYTTEEQIHELFSKSGDVKKIVMGLDKIKKTACGFCFVEYYTRTDAEQAMRFINGTRLDDRIIRTDWDAGFKEGRQYGRGKSGGQVRDEYRQDYDAGRGGYGKIVQSI.

MRNA contacts are provided by residues tyrosine 17, tyrosine 40, 109-113, 120-124, and 130-131; these read RTDWD, RQYGR, and QV. One can recognise an RRM domain in the interval 37–115; that stretch reads CTLYVGNLSF…RIIRTDWDAG (79 aa).

Belongs to the RRM NCBP2 family. In terms of assembly, component of the nuclear cap-binding complex (CBC), a heterodimer composed of ncbp1/cbp80 and ncbp2/cbp20 that interacts with m7GpppG-capped RNA.

It localises to the nucleus. The protein resides in the cytoplasm. Its function is as follows. Component of the cap-binding complex (CBC), which binds co-transcriptionally to the 5' cap of pre-mRNAs and is involved in various processes such as pre-mRNA splicing, translation regulation, nonsense-mediated mRNA decay, RNA-mediated gene silencing (RNAi) by microRNAs (miRNAs) and mRNA export. The CBC complex is involved in mRNA export from the nucleus, leading to the recruitment of the mRNA export machinery to the 5' end of mRNA and to mRNA export in a 5' to 3' direction through the nuclear pore. The CBC complex is also involved in mediating U snRNA and intronless mRNAs export from the nucleus. The CBC complex is essential for a pioneer round of mRNA translation, before steady state translation when the CBC complex is replaced by cytoplasmic cap-binding protein eIF4E. The pioneer round of mRNA translation mediated by the CBC complex plays a central role in nonsense-mediated mRNA decay (NMD), NMD only taking place in mRNAs bound to the CBC complex, but not on eIF4E-bound mRNAs. The CBC complex enhances NMD in mRNAs containing at least one exon-junction complex (EJC), promoting the interaction between upf1 and upf2. The CBC complex is also involved in 'failsafe' NMD, which is independent of the EJC complex, while it does not participate in Staufen-mediated mRNA decay (SMD). During cell proliferation, the CBC complex is also involved in microRNAs (miRNAs) biogenesis via its interaction with srrt/ars2, thereby being required for miRNA-mediated RNA interference. The CBC complex also acts as a negative regulator of parn, thereby acting as an inhibitor of mRNA deadenylation. In the CBC complex, ncbp2/cbp20 recognizes and binds capped RNAs (m7GpppG-capped RNA) but requires ncbp1/cbp80 to stabilize the movement of its N-terminal loop and lock the CBC into a high affinity cap-binding state with the cap structure. The conventional cap-binding complex with NCBP2 binds both small nuclear RNA (snRNA) and messenger (mRNA) and is involved in their export from the nucleus. This is Nuclear cap-binding protein subunit 2 (ncbp2) from Xenopus tropicalis (Western clawed frog).